Consider the following 954-residue polypeptide: MSTTSLQHFPHSYSPFSSSRSLNRMAQSQTSGLDTLAEGSQYALEQLQMSREAAGSGEATDSVGKPKDQFQVDNDNHHNNHSLSNFKNPSQRDPLVEARSTIRKNSASAPVRRRISRACDQCNQLRTKCDGQNPCAHCIDFGLTCEYARERKKRGKASKKDLAAAAAAAAAAATNSGQPNGSSGKEDAALVGGHTSPDRRPTINGRYDPAFEVPRNLNGSAQHSEASGMVGMQNSQHLPPHSQSSMGGGLEGLPLNGYNGLNDSGRPSMPVPELQSLHMLHNSHTNPRSPSSILPHHRYNGGYNDSAYSLMNPQEPNSTSISHFRLGSSTENPPNSFLGLSPPAQSPGWLPLPSPSPANFPSFSMASFSTTLRYPVLHPVLPHIASIIPQSLACDLLDVYFTSSSSSHLSPQSPYVVGYIFRKQSFLHPTKPRVCTPGLLASMLWVAAQTSDAPFLTSPPSARGRVCQKLLELTIGLLRPLIHGPAPGETSPNYAANMVINGVALGGFGVSMDQLGAQSSATGAVDDVATYVHLATVISASEYKAASMRWWTAAWSLARELKLGRELPPNTPHARPDAERDGDPDADLSKRHPPPLITSMGHGPGNTIINITEEEREERRRLWWLLYATDRHLALCYNRPLTLLDKECEGLLQPMNDDLWQAGDFATYRQAGPPVECTGHSMFGYFLPLMTILGEIVDLQQARNHPRFGLAFRNSAECEAQVLEIARQLDVYAQSLKEFETRYTSSLALGAAETEAAMDGSHPNHVSPSGRSSSTVESRVNESIVHTKMVVAYGTHIMHVLHILLAGKWDPINLLDDNDLWISSESFVAAMGHAVGAAEAAAEILEYDPDLSFMPFFFGIYLLQGSFLLLLTADKLQGDASPSVVRACETIVRAHEACVVTLNTEYQRTFRKVMRSALAQVRGRLPEDFGEQQQRRREVLALYRWTGDGSGLAL.

Disordered regions lie at residues 1 to 39 and 51 to 93; these read MSTT…LAEG and REAA…SQRD. The segment covering 8–21 has biased composition (low complexity); sequence HFPHSYSPFSSSRS. Residues 22-33 are compositionally biased toward polar residues; that stretch reads LNRMAQSQTSGL. A compositionally biased stretch (basic and acidic residues) spans 64–78; the sequence is GKPKDQFQVDNDNHH. Residues 82–91 show a composition bias toward polar residues; sequence SLSNFKNPSQ. Residues 119–145 constitute a DNA-binding region (zn(2)-C6 fungal-type); it reads CDQCNQLRTKCDGQNPCAHCIDFGLTC. Disordered regions lie at residues 173 to 226, 310 to 333, 566 to 607, and 758 to 777; these read ATNS…HSEA, LMNP…TENP, ELPP…PGNT, and MDGS…STVE. The segment covering 174–183 has biased composition (polar residues); that stretch reads TNSGQPNGSS. Over residues 574 to 590 the composition is skewed to basic and acidic residues; that stretch reads ARPDAERDGDPDADLSK. Over residues 764–777 the composition is skewed to polar residues; sequence NHVSPSGRSSSTVE.

It belongs to the xlnR/xlr1 family.

The protein resides in the nucleus. In terms of biological role, transcriptional activator of the xylanolytic system. Involved in the regulation of extracellular cellulolytic and xylanolytic genes and in the regulation of the intracellular activities of D-xylose catabolic genes in the pentose catabolic pathway (PCP) in response to the presence of D-xylose. The polypeptide is Xylanolytic transcriptional activator xlnR (xlnR) (Aspergillus fumigatus (strain ATCC MYA-4609 / CBS 101355 / FGSC A1100 / Af293) (Neosartorya fumigata)).